We begin with the raw amino-acid sequence, 1004 residues long: Protein CHUP1, chloroplastic (1004 aa).

The interval 1 to 25 (MFVRIGFVVAASIAAVTVKRLNVKP) is required for chloroplast localization. A disordered region spans residues 22-63 (NVKPSKPSKPSDNGEGGDKEQSVDPDYNLNDKNLQEEEEEEE). Positions 123–341 (EMAYNDGELE…KQVEGLQMNR (219 aa)) form a coiled coil. The segment at 269-290 (LEVQVMELKRKNRELQHEKREL) is leucine-zipper 1. Disordered stretches follow at residues 398 to 482 (GSER…SMNK), 504 to 536 (FGQVDQESPGTPETPNLPRIRTQQQASSPGEGL), 612 to 718 (TATG…GNKV), and 736 to 755 (SKKEGAPSLISSGTGNSSAA). At Ser-399 the chain carries Phosphoserine. The span at 409 to 419 (ESNYSQPSSPG) shows a compositional bias: polar residues. Positions 427–439 (SMDSSTSRFSSFS) are enriched in low complexity. Composition is skewed to polar residues over residues 504 to 517 (FGQVDQESPGTPET) and 612 to 624 (TATGDQSNESNES). Over residues 670–706 (ARPPLPGGGPPPPPPPPGGGPPPPPGGGPPPPPPPPG) the composition is skewed to pro residues. Residues 744-755 (LISSGTGNSSAA) show a composition bias toward polar residues. The segment at 802-823 (LLAFVSWLDEELSFLVDERAVL) is leucine-zipper 2. A disordered region spans residues 979 to 1004 (RSRAKTESGDNNNNNNNNSNEEESVN).

In terms of tissue distribution, expressed in cauline leaves, rosette leaves, stems and flowers, but not in roots.

It localises to the plastid. Its subcellular location is the chloroplast outer membrane. In terms of biological role, required for the positioning and movement of chloroplasts. Interacts with profilin and actin independent of its polymerization status. Regulates chloroplast localization by anchoring chloroplasts to the plasma membrane and forming a bridge to the actin cytoskeleton. The chain is Protein CHUP1, chloroplastic (CHUP1) from Arabidopsis thaliana (Mouse-ear cress).